Consider the following 585-residue polypeptide: Zinc finger protein 496 (585 aa).

The interval 1–41 is disordered; the sequence is MPTALCPRVLAPKESEEPRKMRSPPGENPSPQGEPPSPESS. Over residues 11–20 the composition is skewed to basic and acidic residues; it reads APKESEEPRK. Lysine 13 is covalently cross-linked (Glycyl lysine isopeptide (Lys-Gly) (interchain with G-Cter in SUMO2)). Pro residues predominate over residues 26-38; the sequence is GENPSPQGEPPSP. The SCAN box domain maps to 42–124; the sequence is RRLFRRFRYQ…AAVEALEREP (83 aa). The disordered stretch occupies residues 141–167; that stretch reads DDGDGPAAPQDLEQERMSAESQSYPDA. The residue at position 182 (serine 182) is a Phosphoserine. The KRAB domain maps to 220 to 294; sequence SPFKDMILCF…DLQDKEIPQA (75 aa). A disordered region spans residues 358-397; it reads SSSGDEDSQHSPYCTEELRSPPEDLHSVPAHQSNASAEGE. Basic and acidic residues predominate over residues 373–383; sequence EELRSPPEDLH. The span at 387–397 shows a compositional bias: polar residues; sequence AHQSNASAEGE. A C2H2-type 1; degenerate zinc finger spans residues 405-427; it reads YVCPNCGKIFRWRVNFIRHLRSR. 2 C2H2-type zinc fingers span residues 433–455 and 461–483; these read HKCS…LETH and YRCT…RRIH. Residues 483 to 506 are disordered; it reads HLQPASQQPMKKSEEEALETEGTG. Residue lysine 494 forms a Glycyl lysine isopeptide (Lys-Gly) (interchain with G-Cter in SUMO2) linkage. 2 C2H2-type zinc fingers span residues 520–543 and 551–573; these read FQCG…RHCH and FQCR…ERLH. A Nuclear localization signal motif is present at residues 575-579; that stretch reads KRRSK.

The protein belongs to the krueppel C2H2-type zinc-finger protein family. As to quaternary structure, interacts (via zinc-fingers) with JARID2. Interacts with NSD1.

It localises to the nucleus. Its function is as follows. DNA-binding transcription factor that can both act as an activator and a repressor. The protein is Zinc finger protein 496 (Znf496) of Mus musculus (Mouse).